The following is a 258-amino-acid chain: Imidazole glycerol phosphate synthase subunit HisF (258 aa).

Residues aspartate 11 and aspartate 130 contribute to the active site.

This sequence belongs to the HisA/HisF family. In terms of assembly, heterodimer of HisH and HisF.

Its subcellular location is the cytoplasm. The catalysed reaction is 5-[(5-phospho-1-deoxy-D-ribulos-1-ylimino)methylamino]-1-(5-phospho-beta-D-ribosyl)imidazole-4-carboxamide + L-glutamine = D-erythro-1-(imidazol-4-yl)glycerol 3-phosphate + 5-amino-1-(5-phospho-beta-D-ribosyl)imidazole-4-carboxamide + L-glutamate + H(+). Its pathway is amino-acid biosynthesis; L-histidine biosynthesis; L-histidine from 5-phospho-alpha-D-ribose 1-diphosphate: step 5/9. In terms of biological role, IGPS catalyzes the conversion of PRFAR and glutamine to IGP, AICAR and glutamate. The HisF subunit catalyzes the cyclization activity that produces IGP and AICAR from PRFAR using the ammonia provided by the HisH subunit. The protein is Imidazole glycerol phosphate synthase subunit HisF of Escherichia coli O17:K52:H18 (strain UMN026 / ExPEC).